A 195-amino-acid polypeptide reads, in one-letter code: Pyridoxal 5'-phosphate synthase subunit PdxT (195 aa).

46–48 (GES) provides a ligand contact to L-glutamine. C78 acts as the Nucleophile in catalysis. L-glutamine is bound by residues R106 and 134–135 (IR). Catalysis depends on charge relay system residues H170 and E172.

The protein belongs to the glutaminase PdxT/SNO family. In the presence of PdxS, forms a dodecamer of heterodimers. Only shows activity in the heterodimer.

The catalysed reaction is aldehydo-D-ribose 5-phosphate + D-glyceraldehyde 3-phosphate + L-glutamine = pyridoxal 5'-phosphate + L-glutamate + phosphate + 3 H2O + H(+). It catalyses the reaction L-glutamine + H2O = L-glutamate + NH4(+). It participates in cofactor biosynthesis; pyridoxal 5'-phosphate biosynthesis. Its function is as follows. Catalyzes the hydrolysis of glutamine to glutamate and ammonia as part of the biosynthesis of pyridoxal 5'-phosphate. The resulting ammonia molecule is channeled to the active site of PdxS. This is Pyridoxal 5'-phosphate synthase subunit PdxT from Pseudothermotoga lettingae (strain ATCC BAA-301 / DSM 14385 / NBRC 107922 / TMO) (Thermotoga lettingae).